A 1246-amino-acid chain; its full sequence is DNA-directed RNA polymerase subunit beta (1246 aa).

A disordered region spans residues isoleucine 1171 to alanine 1246. Composition is skewed to acidic residues over residues aspartate 1202–glutamate 1223 and glutamate 1230–glycine 1240.

The protein belongs to the RNA polymerase beta chain family. As to quaternary structure, the RNAP catalytic core consists of 2 alpha, 1 beta, 1 beta' and 1 omega subunit. When a sigma factor is associated with the core the holoenzyme is formed, which can initiate transcription.

It carries out the reaction RNA(n) + a ribonucleoside 5'-triphosphate = RNA(n+1) + diphosphate. DNA-dependent RNA polymerase catalyzes the transcription of DNA into RNA using the four ribonucleoside triphosphates as substrates. This Alkaliphilus metalliredigens (strain QYMF) protein is DNA-directed RNA polymerase subunit beta.